The primary structure comprises 745 residues: Ribosomal protein S6 kinase alpha-6 (745 aa).

Positions 1–28 (MLPFAPQDEPWDREMEVFSGGGASSGEV) are disordered. In terms of domain architecture, Protein kinase 1 spans 73 to 330 (FELLKVLGQG…VEEIKRHLFF (258 aa)). ATP is bound by residues 79 to 87 (LGQGSFGKV) and Lys105. Catalysis depends on Asp198, which acts as the Proton acceptor. Residues Ser232, Ser372, and Ser389 each carry the phosphoserine modification. One can recognise an AGC-kinase C-terminal domain in the interval 331–400 (ANIDWDKLYK…VATSIAEEYK (70 aa)). Residues 426 to 683 (YELKEDIGVG…AEQILKHSWI (258 aa)) form the Protein kinase 2 domain. Residues 432–440 (IGVGSYSVC) and Lys455 contribute to the ATP site. The active-site Proton acceptor is Asp543. Thr581 bears the Phosphothreonine mark.

It belongs to the protein kinase superfamily. AGC Ser/Thr protein kinase family. S6 kinase subfamily. As to quaternary structure, forms a complex with MAPK3/ERK1 but not with MAPK9 or MAPK14 in serum-starved cells. Requires Mg(2+) as cofactor. In terms of processing, phosphorylated at Ser-232, Ser-372, and Ser-389 in serum-starved cells.

Its subcellular location is the cytoplasm. It is found in the cytosol. The protein resides in the nucleus. The enzyme catalyses L-seryl-[protein] + ATP = O-phospho-L-seryl-[protein] + ADP + H(+). It catalyses the reaction L-threonyl-[protein] + ATP = O-phospho-L-threonyl-[protein] + ADP + H(+). Constitutively activated by phosphorylation at Ser-232, Ser-372, and Ser-389 in serum-starved cells. Does not require growth factor stimulation for significant kinase activity. In terms of biological role, constitutively active serine/threonine-protein kinase that exhibits growth-factor-independent kinase activity and that may participate in p53/TP53-dependent cell growth arrest signaling and play an inhibitory role during embryogenesis. This is Ribosomal protein S6 kinase alpha-6 (RPS6KA6) from Homo sapiens (Human).